The following is a 374-amino-acid chain: tRNA (guanine(26)-N(2))-dimethyltransferase (374 aa).

The Trm1 methyltransferase domain maps to isoleucine 4 to isoleucine 368. Residues arginine 41, arginine 66, aspartate 82, aspartate 108, and alanine 109 each contribute to the S-adenosyl-L-methionine site. Zn(2+)-binding residues include cysteine 237, cysteine 240, cysteine 256, and cysteine 259.

This sequence belongs to the class I-like SAM-binding methyltransferase superfamily. Trm1 family.

It catalyses the reaction guanosine(26) in tRNA + 2 S-adenosyl-L-methionine = N(2)-dimethylguanosine(26) in tRNA + 2 S-adenosyl-L-homocysteine + 2 H(+). Functionally, dimethylates a single guanine residue at position 26 of a number of tRNAs using S-adenosyl-L-methionine as donor of the methyl groups. The polypeptide is tRNA (guanine(26)-N(2))-dimethyltransferase (Methanoregula boonei (strain DSM 21154 / JCM 14090 / 6A8)).